Reading from the N-terminus, the 227-residue chain is Cytochrome c oxidase subunit 2 (227 aa).

Over 1–14 (MAYPFQLGLXDATS) the chain is Mitochondrial intermembrane. Residues 15-45 (PIMEELLHFHDHTLMIVFLISSLVLYIITLM) traverse the membrane as a helical segment. Over 46–59 (LTTKLTHTSTMDAQ) the chain is Mitochondrial matrix. Residues 60 to 87 (EVETVWTILPAIILILIALPSLRILYMM) traverse the membrane as a helical segment. Residues 88-227 (DEINNPSLTV…YFETWSAVMV (140 aa)) lie on the Mitochondrial intermembrane side of the membrane. The Cu cation site is built by histidine 161, cysteine 196, glutamate 198, cysteine 200, histidine 204, and methionine 207. Residue glutamate 198 participates in Mg(2+) binding.

This sequence belongs to the cytochrome c oxidase subunit 2 family. As to quaternary structure, component of the cytochrome c oxidase (complex IV, CIV), a multisubunit enzyme composed of 14 subunits. The complex is composed of a catalytic core of 3 subunits MT-CO1, MT-CO2 and MT-CO3, encoded in the mitochondrial DNA, and 11 supernumerary subunits COX4I, COX5A, COX5B, COX6A, COX6B, COX6C, COX7A, COX7B, COX7C, COX8 and NDUFA4, which are encoded in the nuclear genome. The complex exists as a monomer or a dimer and forms supercomplexes (SCs) in the inner mitochondrial membrane with NADH-ubiquinone oxidoreductase (complex I, CI) and ubiquinol-cytochrome c oxidoreductase (cytochrome b-c1 complex, complex III, CIII), resulting in different assemblies (supercomplex SCI(1)III(2)IV(1) and megacomplex MCI(2)III(2)IV(2)). Found in a complex with TMEM177, COA6, COX18, COX20, SCO1 and SCO2. Interacts with TMEM177 in a COX20-dependent manner. Interacts with COX20. Interacts with COX16. Requires Cu cation as cofactor.

It is found in the mitochondrion inner membrane. It catalyses the reaction 4 Fe(II)-[cytochrome c] + O2 + 8 H(+)(in) = 4 Fe(III)-[cytochrome c] + 2 H2O + 4 H(+)(out). Its function is as follows. Component of the cytochrome c oxidase, the last enzyme in the mitochondrial electron transport chain which drives oxidative phosphorylation. The respiratory chain contains 3 multisubunit complexes succinate dehydrogenase (complex II, CII), ubiquinol-cytochrome c oxidoreductase (cytochrome b-c1 complex, complex III, CIII) and cytochrome c oxidase (complex IV, CIV), that cooperate to transfer electrons derived from NADH and succinate to molecular oxygen, creating an electrochemical gradient over the inner membrane that drives transmembrane transport and the ATP synthase. Cytochrome c oxidase is the component of the respiratory chain that catalyzes the reduction of oxygen to water. Electrons originating from reduced cytochrome c in the intermembrane space (IMS) are transferred via the dinuclear copper A center (CU(A)) of subunit 2 and heme A of subunit 1 to the active site in subunit 1, a binuclear center (BNC) formed by heme A3 and copper B (CU(B)). The BNC reduces molecular oxygen to 2 water molecules using 4 electrons from cytochrome c in the IMS and 4 protons from the mitochondrial matrix. The protein is Cytochrome c oxidase subunit 2 (MT-CO2) of Vulpes corsac (Corsac fox).